Reading from the N-terminus, the 452-residue chain is Tripartite motif-containing protein 49D (452 aa).

The RING-type zinc-finger motif lies at 15–56 (CPICLNYFIDPVTIDCGHSFCRPCFYLNWQDIPILTQCFECL). The B box-type zinc-finger motif lies at 88–129 (SEEQMCGTHRETKKIFCEVDRSLLCLLCSSSLEHRYHRHCPA). Residues C93, H96, C115, and H121 each contribute to the Zn(2+) site. The region spanning 269–452 (ELRAGPITGL…LRPIFCCVHL (184 aa)) is the B30.2/SPRY domain.

It belongs to the TRIM/RBCC family.

This Homo sapiens (Human) protein is Tripartite motif-containing protein 49D.